The primary structure comprises 323 residues: tRNA U34 carboxymethyltransferase (323 aa).

Carboxy-S-adenosyl-L-methionine-binding positions include Lys-91, Trp-105, Lys-110, Gly-130, Asp-152–Thr-154, Ile-181–Glu-182, Met-196, Tyr-200, and Arg-315.

The protein belongs to the class I-like SAM-binding methyltransferase superfamily. CmoB family. Homotetramer.

It catalyses the reaction carboxy-S-adenosyl-L-methionine + 5-hydroxyuridine(34) in tRNA = 5-carboxymethoxyuridine(34) in tRNA + S-adenosyl-L-homocysteine + H(+). Its function is as follows. Catalyzes carboxymethyl transfer from carboxy-S-adenosyl-L-methionine (Cx-SAM) to 5-hydroxyuridine (ho5U) to form 5-carboxymethoxyuridine (cmo5U) at position 34 in tRNAs. This is tRNA U34 carboxymethyltransferase from Escherichia coli O81 (strain ED1a).